We begin with the raw amino-acid sequence, 347 residues long: D-alanine--D-alanine ligase (347 aa).

In terms of domain architecture, ATP-grasp spans 134-332; the sequence is KLYAKDLGVK…LAQSLPKTPK (199 aa). 161–216 serves as a coordination point for ATP; that stretch reads LIKFNFPFIVKPSNAGSSLGVNVVKEEKELVYALDSAFEYSKEVLIEPFIQGVKEY. The Mg(2+) site is built by Asp288, Glu300, and Asn302.

The protein belongs to the D-alanine--D-alanine ligase family. The cofactor is Mg(2+). Mn(2+) is required as a cofactor.

Its subcellular location is the cytoplasm. It catalyses the reaction 2 D-alanine + ATP = D-alanyl-D-alanine + ADP + phosphate + H(+). It participates in cell wall biogenesis; peptidoglycan biosynthesis. In terms of biological role, cell wall formation. This is D-alanine--D-alanine ligase from Helicobacter pylori (strain P12).